The following is a 338-amino-acid chain: tRNA methyltransferase 10 homolog A (338 aa).

2 disordered regions span residues 1 to 91 (MSSE…DRKR) and 296 to 338 (RVEG…SVPH). Serine 22 bears the Phosphoserine mark. Residues 52–80 (KQWEEQRELRKQKRKEKRKRKQLERQCQP) adopt a coiled-coil conformation. Residues 61 to 73 (RKQKRKEKRKRKQ) are compositionally biased toward basic residues. Positions 88-279 (DRKRIRRDVV…TILPQRKGAV (192 aa)) constitute an SAM-dependent MTase TRM10-type domain. Positions 308–328 (EENRHELDSTHEEEKQDKENS) are enriched in basic and acidic residues. Residues 329 to 338 (TESTVNSVPH) show a composition bias toward polar residues. Serine 335 is subject to Phosphoserine.

The protein belongs to the class IV-like SAM-binding methyltransferase superfamily. TRM10 family. Interacts with tRNA.

The protein localises to the nucleus. Its subcellular location is the nucleolus. The enzyme catalyses guanosine(9) in tRNA + S-adenosyl-L-methionine = N(1)-methylguanosine(9) in tRNA + S-adenosyl-L-homocysteine + H(+). Functionally, S-adenosyl-L-methionine-dependent guanine N(1)-methyltransferase that catalyzes the formation of N(1)-methylguanine at position 9 (m1G9) in tRNAs. Probably not able to catalyze formation of N(1)-methyladenine at position 9 (m1A9) in tRNAs. This chain is tRNA methyltransferase 10 homolog A (TRMT10A), found in Bos taurus (Bovine).